Reading from the N-terminus, the 521-residue chain is 7-deoxyloganic acid hydroxylase (521 aa).

A helical membrane pass occupies residues 8 to 28; it reads IIFLVFVSLTLYWVYRILDWV. Asn-107 and Asn-311 each carry an N-linked (GlcNAc...) asparagine glycan. Cys-469 provides a ligand contact to heme.

Belongs to the cytochrome P450 family. In terms of tissue distribution, mostly present in actively growing aerial organs, including leaves, flower buds and stems, and, to a lower extent, in mature leaves, roots and opened flowers. Expressed in the leaf internal phloem-associated parenchyma (IPAP) inside the mesophyll.

The protein localises to the endoplasmic reticulum membrane. It carries out the reaction 7-deoxyloganate + reduced [NADPH--hemoprotein reductase] + O2 = loganate + oxidized [NADPH--hemoprotein reductase] + H2O + H(+). The protein operates within alkaloid biosynthesis. In terms of biological role, component of the seco-iridoid and derivatives monoterpenoid indole alkaloids (MIAs, e.g. vincristine, quinine, and strychnine) biosynthesis pathway. Catalyzes the conversion of 7-deoxyloganic acid into loganic acid. Not active on 7-deoxyloganetic acid. In Catharanthus roseus (Madagascar periwinkle), this protein is 7-deoxyloganic acid hydroxylase.